The primary structure comprises 365 residues: Popy Class I histocompatibility antigen, A-1 alpha chain (365 aa).

An N-terminal signal peptide occupies residues 1-24 (MAIMAPRTLLLLLSGALALTQTWA). The alpha-1 stretch occupies residues 25–114 (GSHSMRYFST…LRGYYNQSDG (90 aa)). Over 25 to 308 (GSHSMRYFST…ELSSQPTIPI (284 aa)) the chain is Extracellular. Residue N110 is glycosylated (N-linked (GlcNAc...) asparagine). The tract at residues 115 to 206 (GSHTIQRMFG…ENGKETLQRT (92 aa)) is alpha-2. 2 disulfide bridges follow: C125–C188 and C227–C283. The alpha-3 stretch occupies residues 207-298 (DAPKTHMTHH…GLPEPLTLRW (92 aa)). In terms of domain architecture, Ig-like C1-type spans 209 to 297 (PKTHMTHHPV…EGLPEPLTLR (89 aa)). The interval 299–308 (ELSSQPTIPI) is connecting peptide. The chain crosses the membrane as a helical span at residues 309-332 (VGIIAGLVLLGAVITGAVVAAVMW). The Cytoplasmic segment spans residues 333–365 (RRRNSDRKGGSYSQAASNDSAQGSDVSLTACKV). The segment at 340 to 365 (KGGSYSQAASNDSAQGSDVSLTACKV) is disordered. The residue at position 343 (S343) is a Phosphoserine. The segment covering 343–359 (SYSQAASNDSAQGSDVS) has biased composition (polar residues). Residue Y344 is modified to Phosphotyrosine. Phosphoserine occurs at positions 345, 349, 352, 356, and 359.

This sequence belongs to the MHC class I family. In terms of assembly, heterodimer of an alpha chain and a beta chain (beta-2-microglobulin).

The protein resides in the membrane. Functionally, involved in the presentation of foreign antigens to the immune system. This chain is Popy Class I histocompatibility antigen, A-1 alpha chain, found in Pongo pygmaeus (Bornean orangutan).